The primary structure comprises 351 residues: Nicotinate-nucleotide--dimethylbenzimidazole phosphoribosyltransferase (351 aa).

Glu317 (proton acceptor) is an active-site residue.

This sequence belongs to the CobT family.

The catalysed reaction is 5,6-dimethylbenzimidazole + nicotinate beta-D-ribonucleotide = alpha-ribazole 5'-phosphate + nicotinate + H(+). It participates in nucleoside biosynthesis; alpha-ribazole biosynthesis; alpha-ribazole from 5,6-dimethylbenzimidazole: step 1/2. Catalyzes the synthesis of alpha-ribazole-5'-phosphate from nicotinate mononucleotide (NAMN) and 5,6-dimethylbenzimidazole (DMB). The chain is Nicotinate-nucleotide--dimethylbenzimidazole phosphoribosyltransferase from Bradyrhizobium sp. (strain ORS 278).